The chain runs to 200 residues: Pyrrolidone-carboxylate peptidase (200 aa).

Catalysis depends on residues Glu78, Cys141, and His165.

The protein belongs to the peptidase C15 family. Homotetramer.

The protein resides in the cytoplasm. The enzyme catalyses Release of an N-terminal pyroglutamyl group from a polypeptide, the second amino acid generally not being Pro.. Functionally, removes 5-oxoproline from various penultimate amino acid residues except L-proline. The protein is Pyrrolidone-carboxylate peptidase of Lactobacillus helveticus (strain DPC 4571).